Reading from the N-terminus, the 217-residue chain is ATP-dependent Clp protease proteolytic subunit (217 aa).

The Nucleophile role is filled by S120. Residue H145 is part of the active site.

It belongs to the peptidase S14 family. As to quaternary structure, fourteen ClpP subunits assemble into 2 heptameric rings which stack back to back to give a disk-like structure with a central cavity, resembling the structure of eukaryotic proteasomes.

The protein localises to the cytoplasm. It carries out the reaction Hydrolysis of proteins to small peptides in the presence of ATP and magnesium. alpha-casein is the usual test substrate. In the absence of ATP, only oligopeptides shorter than five residues are hydrolyzed (such as succinyl-Leu-Tyr-|-NHMec, and Leu-Tyr-Leu-|-Tyr-Trp, in which cleavage of the -Tyr-|-Leu- and -Tyr-|-Trp bonds also occurs).. Functionally, cleaves peptides in various proteins in a process that requires ATP hydrolysis. Has a chymotrypsin-like activity. Plays a major role in the degradation of misfolded proteins. This chain is ATP-dependent Clp protease proteolytic subunit, found in Ralstonia nicotianae (strain ATCC BAA-1114 / GMI1000) (Ralstonia solanacearum).